We begin with the raw amino-acid sequence, 570 residues long: Membrane protein insertase YidC (570 aa).

The span at 31–60 (QQPVAQTPSVTIDSNGADSSALLNSPNTGE) shows a compositional bias: polar residues. Positions 31 to 79 (QQPVAQTPSVTIDSNGADSSALLNSPNTGELDTPETASKPATAEDSNIS) are disordered. The next 5 helical transmembrane spans lie at 230–250 (PTFS…STPE), 378–398 (WGIA…HLSA), 444–464 (LGGC…YWVL), 487–507 (PYFV…SLNP), and 522–542 (PIIF…YWLV).

Belongs to the OXA1/ALB3/YidC family. Type 1 subfamily. Interacts with the Sec translocase complex via SecD. Specifically interacts with transmembrane segments of nascent integral membrane proteins during membrane integration.

It is found in the cell inner membrane. Its function is as follows. Required for the insertion and/or proper folding and/or complex formation of integral membrane proteins into the membrane. Involved in integration of membrane proteins that insert both dependently and independently of the Sec translocase complex, as well as at least some lipoproteins. Aids folding of multispanning membrane proteins. In Hahella chejuensis (strain KCTC 2396), this protein is Membrane protein insertase YidC.